The following is a 251-amino-acid chain: Sugar fermentation stimulation protein homolog (251 aa).

Belongs to the SfsA family.

This is Sugar fermentation stimulation protein homolog from Prochlorococcus marinus (strain SARG / CCMP1375 / SS120).